Here is a 268-residue protein sequence, read N- to C-terminus: Undecaprenyl-diphosphatase (268 aa).

8 consecutive transmembrane segments (helical) span residues 4-24 (STTLVALVLGLLEGLTEFIPV), 50-70 (IQLGAVLAVLTVYAAKLVSVI), 84-104 (VAVLVAFLPAVVIGVLAHGFI), 109-129 (FETPILIATMLILGGIVLLFV), 144-164 (LPLNVALKIGFIQCLAMVPGV), 185-205 (AEFSFFLSMPTMAGAFAFDLF), 214-234 (SALGEIAVGFVAAFVAAVLVV), and 247-267 (ALFGWWRIAVGSVALAALLAG).

The protein belongs to the UppP family.

It localises to the cell inner membrane. It carries out the reaction di-trans,octa-cis-undecaprenyl diphosphate + H2O = di-trans,octa-cis-undecaprenyl phosphate + phosphate + H(+). Catalyzes the dephosphorylation of undecaprenyl diphosphate (UPP). Confers resistance to bacitracin. The polypeptide is Undecaprenyl-diphosphatase (Cereibacter sphaeroides (strain ATCC 17029 / ATH 2.4.9) (Rhodobacter sphaeroides)).